The following is a 466-amino-acid chain: Alpha-1A adrenergic receptor (466 aa).

At 1-25 (MVFLSGNASDSSNCTQPPAPVNIPK) the chain is on the extracellular side. N-linked (GlcNAc...) asparagine glycosylation is found at asparagine 7 and asparagine 13. The chain crosses the membrane as a helical span at residues 26–51 (AILLGVILGVLILFGVPGNILVILSV). The Cytoplasmic portion of the chain corresponds to 52 to 63 (ACHRHLHSVTHY). A helical transmembrane segment spans residues 64-89 (YIVNLAVADLLLTSTVLPFSAIFEIL). At 90–99 (GYWAFGRVFC) the chain is on the extracellular side. The chain crosses the membrane as a helical span at residues 100–122 (NIWAAVDVLCCTASIMSLCIISI). Residues 123-143 (DRYIGVSYPLRYPTIVTQRRG) are Cytoplasmic-facing. Residues 144 to 168 (LRALLCLWALSLVISIGPLFGWRQP) traverse the membrane as a helical segment. The Extracellular portion of the chain corresponds to 169–181 (APQDETICQINED). Residues 182–205 (PSYVLFSALGSFYVPLAIILVMYC) traverse the membrane as a helical segment. Over 206–272 (RVYVVAKRES…KFSREKKAAK (67 aa)) the chain is Cytoplasmic. A helical membrane pass occupies residues 273–297 (TLGIVVGCFVLCWLPFFLVMPIGSF). Over 298-304 (FPDFKPS) the chain is Extracellular. The helical transmembrane segment at 305–329 (ETVFKIVFWLGYLNSCINPIIYPCS) threads the bilayer. Residues 330-466 (SQEFKKAFQN…ISLSENGEEV (137 aa)) are Cytoplasmic-facing. A Nuclear localization signal motif is present at residues 334–349 (KKAFQNVLKIQCLRRK). Residue cysteine 345 is the site of S-palmitoyl cysteine attachment.

It belongs to the G-protein coupled receptor 1 family. Adrenergic receptor subfamily. ADRA1A sub-subfamily. In terms of assembly, homo- and heterooligomer. Heterooligomerizes with ADRA1B homooligomers in cardiac myocytes. Interacts with CAVIN4.

It is found in the nucleus membrane. The protein resides in the cell membrane. It localises to the cytoplasm. The protein localises to the membrane. Its subcellular location is the caveola. In terms of biological role, this alpha-adrenergic receptor mediates its action by association with G proteins that activate a phosphatidylinositol-calcium second messenger system. Its effect is mediated by G(q) and G(11) proteins. Nuclear ADRA1A-ADRA1B heterooligomers regulate phenylephrine (PE)-stimulated ERK signaling in cardiac myocytes. The chain is Alpha-1A adrenergic receptor (ADRA1A) from Cavia porcellus (Guinea pig).